The following is a 683-amino-acid chain: Acetyl-coenzyme A synthetase 2 (683 aa).

Residues 207 to 210 (RGGK) and T326 contribute to the CoA site. Residues 402 to 404 (GEP), 426 to 431 (DTFWQT), D517, and R532 each bind ATP. S540 provides a ligand contact to CoA. R543 provides a ligand contact to ATP. Residue R613 participates in CoA binding.

This sequence belongs to the ATP-dependent AMP-binding enzyme family.

It catalyses the reaction acetate + ATP + CoA = acetyl-CoA + AMP + diphosphate. The polypeptide is Acetyl-coenzyme A synthetase 2 (ACS2) (Candida glabrata (strain ATCC 2001 / BCRC 20586 / JCM 3761 / NBRC 0622 / NRRL Y-65 / CBS 138) (Yeast)).